A 276-amino-acid chain; its full sequence is NADPH-dependent 7-cyano-7-deazaguanine reductase (276 aa).

83–85 contributes to the substrate binding site; the sequence is IES. Position 85 to 86 (85 to 86) interacts with NADPH; sequence SK. The Thioimide intermediate role is filled by Cys-184. Asp-191 (proton donor) is an active-site residue. 223–224 contributes to the substrate binding site; the sequence is HE. Residue 252-253 coordinates NADPH; it reads RG.

The protein belongs to the GTP cyclohydrolase I family. QueF type 2 subfamily. As to quaternary structure, homodimer.

It localises to the cytoplasm. It carries out the reaction 7-aminomethyl-7-carbaguanine + 2 NADP(+) = 7-cyano-7-deazaguanine + 2 NADPH + 3 H(+). Its pathway is tRNA modification; tRNA-queuosine biosynthesis. Its function is as follows. Catalyzes the NADPH-dependent reduction of 7-cyano-7-deazaguanine (preQ0) to 7-aminomethyl-7-deazaguanine (preQ1). The chain is NADPH-dependent 7-cyano-7-deazaguanine reductase from Pseudomonas savastanoi pv. phaseolicola (strain 1448A / Race 6) (Pseudomonas syringae pv. phaseolicola (strain 1448A / Race 6)).